A 276-amino-acid chain; its full sequence is UPF0761 membrane protein APL_1950 (276 aa).

7 helical membrane-spanning segments follow: residues 33–53 (TLAIVPLVMVVFSIFTAFPIF), 90–110 (MGIVSTIGLVVVALMLIQSID), 125–145 (IFISFLLYAVILFIAPLLAGG), 147–167 (IAISSYIFSMAIFNENGLLSF), 171–191 (LLQYTPFLLIWLLFTTVYWLV), 203–223 (LGAIVAAIFFTLGKQAFVWYI), and 239–259 (LPIMLLWIHLSWQVVLFGGLI).

The protein belongs to the UPF0761 family.

The protein resides in the cell inner membrane. The polypeptide is UPF0761 membrane protein APL_1950 (Actinobacillus pleuropneumoniae serotype 5b (strain L20)).